Here is a 40-residue protein sequence, read N- to C-terminus: Photosystem II reaction center protein J (40 aa).

Residues 8–28 (IPLWLIGTVTGILVIGLIGVF) form a helical membrane-spanning segment.

The protein belongs to the PsbJ family. PSII is composed of 1 copy each of membrane proteins PsbA, PsbB, PsbC, PsbD, PsbE, PsbF, PsbH, PsbI, PsbJ, PsbK, PsbL, PsbM, PsbT, PsbX, PsbY, PsbZ, Psb30/Ycf12, at least 3 peripheral proteins of the oxygen-evolving complex and a large number of cofactors. It forms dimeric complexes.

It is found in the plastid. The protein resides in the chloroplast thylakoid membrane. Functionally, one of the components of the core complex of photosystem II (PSII). PSII is a light-driven water:plastoquinone oxidoreductase that uses light energy to abstract electrons from H(2)O, generating O(2) and a proton gradient subsequently used for ATP formation. It consists of a core antenna complex that captures photons, and an electron transfer chain that converts photonic excitation into a charge separation. This Nymphaea alba (White water-lily) protein is Photosystem II reaction center protein J.